Here is a 422-residue protein sequence, read N- to C-terminus: MVMHAHAYPDIEIPTPSQIAAVALNNEPDENGEQSMVLSMGPQHPSTHGVLRLAVELNGENVVQLAPDVGFLHTGIEKTIETKTYTKSIVLTDRMDYLAPMSNNMVYVAAIEKLMQQDVPERAQTLRVLLLELTRINSHLVWLGTHALDLAAMSVFFYAMREREYILDIFEMLTGARMMTSYFRVGGLAWDIPADFIPTVEDFLTHFLPKVDEYEDLLTNNLLWKQRTKGVGVVNAADAIALGLSGANLRASGVDWDLRKTMPYSGYETYQFDVPVGQAGDIYDRYRCRVQEMRESVKIARQAIERVKQMHGQPYVTENRKVAPPPKSEITYSMESLIHHFKLWTEGFRPPRGSAYAAIESPRGEIGCYVVSDGTPKPWRVHFRAPSFINLQALPHIAKGKLMADLVALIASIDPVLGEVDR.

It belongs to the complex I 49 kDa subunit family. NDH-1 is composed of 14 different subunits. Subunits NuoB, C, D, E, F, and G constitute the peripheral sector of the complex.

Its subcellular location is the cell membrane. The catalysed reaction is a quinone + NADH + 5 H(+)(in) = a quinol + NAD(+) + 4 H(+)(out). NDH-1 shuttles electrons from NADH, via FMN and iron-sulfur (Fe-S) centers, to quinones in the respiratory chain. The immediate electron acceptor for the enzyme in this species is believed to be ubiquinone. Couples the redox reaction to proton translocation (for every two electrons transferred, four hydrogen ions are translocated across the cytoplasmic membrane), and thus conserves the redox energy in a proton gradient. The sequence is that of NADH-quinone oxidoreductase subunit D 1 from Herpetosiphon aurantiacus (strain ATCC 23779 / DSM 785 / 114-95).